The following is a 374-amino-acid chain: Biotin synthase (374 aa).

Residues 49–276 (NEVQVSTLLS…KSHVRLSAGR (228 aa)) enclose the Radical SAM core domain. Residues cysteine 64, cysteine 68, and cysteine 71 each coordinate [4Fe-4S] cluster. [2Fe-2S] cluster contacts are provided by cysteine 108, cysteine 139, cysteine 199, and arginine 271. Residues 344 to 374 (QQQEQAEGSNDLFIDATKPKVAAKQQHATEA) form a disordered region.

It belongs to the radical SAM superfamily. Biotin synthase family. In terms of assembly, homodimer. The cofactor is [4Fe-4S] cluster. Requires [2Fe-2S] cluster as cofactor.

It carries out the reaction (4R,5S)-dethiobiotin + (sulfur carrier)-SH + 2 reduced [2Fe-2S]-[ferredoxin] + 2 S-adenosyl-L-methionine = (sulfur carrier)-H + biotin + 2 5'-deoxyadenosine + 2 L-methionine + 2 oxidized [2Fe-2S]-[ferredoxin]. It functions in the pathway cofactor biosynthesis; biotin biosynthesis; biotin from 7,8-diaminononanoate: step 2/2. In terms of biological role, catalyzes the conversion of dethiobiotin (DTB) to biotin by the insertion of a sulfur atom into dethiobiotin via a radical-based mechanism. In Alteromonas mediterranea (strain DSM 17117 / CIP 110805 / LMG 28347 / Deep ecotype), this protein is Biotin synthase.